Reading from the N-terminus, the 427-residue chain is Glutamyl-tRNA reductase (427 aa).

Residues 50-53, Ser110, 115-117, and Gln121 each bind substrate; these read TCNR and ETQ. The active-site Nucleophile is Cys51. Residue 190-195 coordinates NADP(+); it reads GAGEMG.

The protein belongs to the glutamyl-tRNA reductase family. Homodimer.

It carries out the reaction (S)-4-amino-5-oxopentanoate + tRNA(Glu) + NADP(+) = L-glutamyl-tRNA(Glu) + NADPH + H(+). It functions in the pathway porphyrin-containing compound metabolism; protoporphyrin-IX biosynthesis; 5-aminolevulinate from L-glutamyl-tRNA(Glu): step 1/2. Catalyzes the NADPH-dependent reduction of glutamyl-tRNA(Glu) to glutamate 1-semialdehyde (GSA). This is Glutamyl-tRNA reductase from Campylobacter concisus (strain 13826).